A 352-amino-acid chain; its full sequence is Enhancer of mRNA-decapping protein 1 (352 aa).

Disordered stretches follow at residues Met1 to His258 and Gln277 to Ser352. Residues His71–Lys80 show a composition bias toward low complexity. Polar residues-rich tracts occupy residues Asn93–Gly104 and Thr205–Val225. The segment covering Gly289 to Gln309 has biased composition (low complexity).

This sequence belongs to the EDC family.

The protein localises to the cytoplasm. Functionally, mRNA-binding protein which stimulates mRNA decapping. This Debaryomyces hansenii (strain ATCC 36239 / CBS 767 / BCRC 21394 / JCM 1990 / NBRC 0083 / IGC 2968) (Yeast) protein is Enhancer of mRNA-decapping protein 1 (EDC1).